The sequence spans 370 residues: Anhydro-N-acetylmuramic acid kinase (370 aa).

12–19 (GTSLDGVD) is a binding site for ATP.

The protein belongs to the anhydro-N-acetylmuramic acid kinase family.

The enzyme catalyses 1,6-anhydro-N-acetyl-beta-muramate + ATP + H2O = N-acetyl-D-muramate 6-phosphate + ADP + H(+). The protein operates within amino-sugar metabolism; 1,6-anhydro-N-acetylmuramate degradation. It functions in the pathway cell wall biogenesis; peptidoglycan recycling. Functionally, catalyzes the specific phosphorylation of 1,6-anhydro-N-acetylmuramic acid (anhMurNAc) with the simultaneous cleavage of the 1,6-anhydro ring, generating MurNAc-6-P. Is required for the utilization of anhMurNAc either imported from the medium or derived from its own cell wall murein, and thus plays a role in cell wall recycling. The sequence is that of Anhydro-N-acetylmuramic acid kinase from Yersinia pseudotuberculosis serotype O:1b (strain IP 31758).